Here is a 217-residue protein sequence, read N- to C-terminus: Oxygen regulatory protein NreC (217 aa).

One can recognise a Response regulatory domain in the interval 2-119 (KIVIADDHAV…QLLLAVRTVY (118 aa)). Asp-53 is modified (4-aspartylphosphate). The region spanning 148-213 (TNDPFKILSK…ELVEYALKKK (66 aa)) is the HTH luxR-type domain. A DNA-binding region (H-T-H motif) is located at residues 172–191 (NKDIAEKLFVSVKTVEAHKT).

Phosphorylated by NreB.

Its subcellular location is the cytoplasm. Its function is as follows. Member of the two-component regulatory system NreB/NreC involved in the control of dissimilatory nitrate/nitrite reduction in response to oxygen. Phosphorylated NreC binds to a GC-rich palindromic sequence at the promoters of the nitrate (narGHJI) and nitrite (nir) reductase operons, as well as the putative nitrate transporter gene narT, and activates their expression. The sequence is that of Oxygen regulatory protein NreC (nreC) from Staphylococcus haemolyticus (strain JCSC1435).